The sequence spans 2045 residues: Host cell factor 1 (2045 aa).

An N-acetylalanine modification is found at A2. Position 6 is a phosphoserine (S6). Kelch repeat units lie at residues 44–89, 93–140, 148–194, 217–265, and 266–313; these read LIVV…GFVC, RLLV…RLGH, KCYL…ITYG, KLVI…TIGN, and KMYV…LMDT. Residues K105, K163, and K244 each participate in a glycyl lysine isopeptide (Lys-Gly) (interchain with G-Cter in ubiquitin) cross-link. A Glycyl lysine isopeptide (Lys-Gly) (interchain with G-Cter in SUMO2) cross-link involves residue K282. K288 is modified (N6-acetyllysine). A Glycyl lysine isopeptide (Lys-Gly) (interchain with G-Cter in ubiquitin) cross-link involves residue K363. The 92-residue stretch at 366-457 folds into the Fibronectin type-III 1 domain; it reads PPARVQLVRA…VPQAATAPPS (92 aa). Positions 407–434 are disordered; the sequence is ATATSPTPNPVPSVPANPPKSPAPAAAA. Position 411 is a phosphoserine (S411). Residues 413-428 show a composition bias toward pro residues; it reads TPNPVPSVPANPPKSP. The tract at residues 500–550 is required for interaction with OGT; that stretch reads LVTMRPASQAGKAPVTVTSLPASVRMVVPTQSAQGTVIGSNPQMSGMAALA. Omega-N-methylarginine is present on residues R504 and R524. 3 positions are modified to phosphoserine: S598, S666, and S669. Residues 610–722 form an interaction with SIN3A region; sequence LKTAAAQVGT…KGPLPAGTIL (113 aa). The interaction with ZBTB17 stretch occupies residues 750-902; that stretch reads ILGISSVSPS…SLAGAGAHST (153 aa). Residue K813 is modified to N6-acetyllysine. An interaction with GABP2 region spans residues 813–912; the sequence is KIITAVPKIA…SASLATPITT (100 aa). HCF repeat repeat units follow at residues 1010–1035, 1072–1097, and 1101–1126; these read TLVCSNPPCETHETGTTNTATTTVVA, VRVCSNPPCETHETGTTNTATTATSN, and QHGCSNPPCETHETGTTSTATTAMSS. One copy of the HCF repeat 4; degenerate repeat lies at 1157–1182; sequence VQGTVKPQCQTQQTNMTTTTMTVQAT. S1204 carries the post-translational modification Phosphoserine. Residue R1216 is modified to Asymmetric dimethylarginine. Disordered stretches follow at residues 1219–1242, 1302–1375, 1444–1475, and 1494–1525; these read LSGPSSKDMPTGRQPETYHTYTTN, PCET…TSTG, TVTSNMSSNQDPPPAASDQGEVASTQGDSTNI, and TTVTQSTPVPGPSVPPPEELQVSPGPRQQLPP. S1223 carries the post-translational modification Phosphoserine. HCF repeat repeat units lie at residues 1295-1320 and 1323-1348; these read TQVCSNPPCETHETGTTNTATTSNAG and QRVCSNPPCETHETGTTHTATTATSN. Low complexity predominate over residues 1308-1321; that stretch reads TGTTNTATTSNAGS. One copy of the HCF repeat 7; degenerate repeat lies at 1358-1383; sequence QQPASGHPCETHQTTSTGTTMSVSVG. An HCF repeat 8 repeat occupies 1423 to 1448; that stretch reads QRVCSNPPCETHETGTTHTATTVTSN. Phosphothreonine is present on T1500. A compositionally biased stretch (pro residues) spans 1502–1511; that stretch reads VPGPSVPPPE. A phosphoserine mark is found at S1506, S1516, and S1781. 2 consecutive Fibronectin type-III domains span residues 1808–1898 and 1900–2016; these read PPPP…TCLP and FPGA…TSKD. Glycyl lysine isopeptide (Lys-Gly) (interchain with G-Cter in ubiquitin) cross-links involve residues K1817 and K1818. S1848 bears the Phosphoserine mark. The tract at residues 2004–2045 is disordered; sequence ATQVRWLQETSKDSSGTKPASKRPMSSPEMKSAPKKSKADGQ. K2015 is subject to N6-acetyllysine. Residue K2034 forms a Glycyl lysine isopeptide (Lys-Gly) (interchain with G-Cter in SUMO2) linkage.

In terms of assembly, composed predominantly of six polypeptides ranging from 110 to 150 kDa and a minor 300 kDa polypeptide. The majority of N- and C-terminal cleavage products remain tightly, albeit non-covalently, associated. Interacts with POU2F1, CREB3, ZBTB17, EGR2, E2F4, CREBZF, SP1, GABP2, Sin3 HDAC complex (SIN3A, HDAC1, HDAC2, SUDS3), SAP30, SIN3B and FHL2. Component of a MLL1 complex, composed of at least the core components KMT2A/MLL1, ASH2L, HCFC1, WDR5 and RBBP5, as well as the facultative components BACC1, CHD8, DPY30, E2F6, HCFC2, HSP70, INO80C, KANSL1, LAS1L, MAX, MCRS1, MEN1, MGA, KAT8, PELP1, PHF20, PRP31, RING2, RUVBL1, RUVBL2, SENP3, TAF1, TAF4, TAF6, TAF7, TAF9 and TEX10. Component of a THAP1/THAP3-HCFC1-OGT complex that is required for the regulation of the transcriptional activity of RRM1. Interacts directly with THAP3 (via its HBM). Interacts (via the Kelch-repeat domain) with THAP1 (via the HBM); the interaction recruits HCHC1 to the RRM1. Interacts with THAP7 and THAP11 (via the HMB). Interacts directly with OGT; the interaction, which requires the HCFC1 cleavage site domain, glycosylates and promotes the proteolytic processing of HCFC1 and retains OGT in the nucleus. Component of the SET1 complex, at least composed of the catalytic subunit (SETD1A or SETD1B), WDR5, WDR82, RBBP5, ASH2L, CXXC1, HCFC1 and DPY30. Component of the NSL complex at least composed of MOF/KAT8, KANSL1, KANSL2, KANSL3, MCRS1, PHF20, OGT1/OGT, WDR5 and HCFC1. Component of a complex at least composed of ZNF335, HCFC1, CCAR2, EMSY, MKI67, RBBP5, ASH2L and WDR5; the complex is formed as a result of interactions between components of a nuclear receptor-mediated transcription complex and a histone methylation complex. Within the complex interacts with ZNF335. Interacts with TET2 and TET3. Interacts with HCFC1R1. Interacts with THAP11. Interacts (via Kelch domain) with KMT2E (via HBM motif). Interacts with E2F1. Accessory scaffold component of the polycomb repressive deubiquitinase (PR-DUB) complex, at least composed of BAP1, one of ASXL1, ASXL2 or (probably) ASXL3 and one of MBD5 or MBD6; the PR-DUB core associates with a number of accessory proteins, including FOXK1, FOXK2, KDM1B, HCFC1, YY1 and OGT. Interacts with YY1 (via Gly-rich region); the interaction is direct. Interacts with BAP1 (via HBM-like motif). Post-translationally, proteolytically cleaved at one or several PPCE--THET sites within the HCF repeats. Further cleavage of the primary N- and C-terminal chains results in a 'trimming' and accumulation of the smaller chains. Cleavage is promoted by O-glycosylation. O-glycosylated. GlcNAcylation by OGT promotes proteolytic processing. In terms of processing, ubiquitinated. Lys-1817 and Lys-1818 are ubiquitinated both via 'Lys-48'- and 'Lys-63'-linked polyubiquitin chains. BAP1 mediated deubiquitination of 'Lys-48'-linked polyubiquitin chains; deubiquitination by BAP1 does not seem to stabilize the protein. Expressed in liver, pituitary gland, skeletal muscle, kidney, eye and brain (at protein level). Also observed at low level in heart, spleen and lung.

The protein resides in the nucleus. Its subcellular location is the cytoplasm. Its function is as follows. Transcriptional coregulator. Serves as a scaffold protein, bridging interactions between transcription factors, including THAP11 and ZNF143, and transcriptional coregulators. Involved in control of the cell cycle. Also antagonizes transactivation by ZBTB17 and GABP2; represses ZBTB17 activation of the p15(INK4b) promoter and inhibits its ability to recruit p300. Coactivator for EGR2 and GABP2. Tethers the chromatin modifying Set1/Ash2 histone H3 'Lys-4' methyltransferase (H3K4me) and Sin3 histone deacetylase (HDAC) complexes (involved in the activation and repression of transcription respectively) together. As part of the NSL complex it may be involved in acetylation of nucleosomal histone H4 on several lysine residues. Recruits KMT2E to E2F1 responsive promoters promoting transcriptional activation and thereby facilitates G1 to S phase transition. Modulates expression of homeobox protein PDX1, perhaps acting in concert with transcription factor E2F1, thereby regulating pancreatic beta-cell growth and glucose-stimulated insulin secretion. May negatively modulate transcriptional activity of FOXO3. This chain is Host cell factor 1, found in Mus musculus (Mouse).